Consider the following 337-residue polypeptide: MDYKSAGVDVEAGYEFVARIRGAVERTRRPEQLGGLGGFGGLFALPAGYREPVLVAGTDGVGTKLKLAFALDRHDTIGIDCVAMCVNDVLAQGAEPLFFLDYLATGKLSPAQLAGVVEGIAAGCLEAGCTLLGGETAEMPGFYAAGEYDVAGFCVGIVERSQIIDGNRVQVGDALLGLSSSGVHSNGFSLVRRIVELAGLDWHHRPEDFPASLGEVLLTPTRIYVKPVRAALEAGFDIRGIAHITGGGLIENVPRALGGLGACLERNSWPVPPVFTWLERTGGVGRQDMDQTFNLGLGLVLACPTEQADALQAYLAKQGEQVLRIGAVVEAAGVRFA.

This sequence belongs to the AIR synthase family.

It is found in the cytoplasm. The enzyme catalyses 2-formamido-N(1)-(5-O-phospho-beta-D-ribosyl)acetamidine + ATP = 5-amino-1-(5-phospho-beta-D-ribosyl)imidazole + ADP + phosphate + H(+). It functions in the pathway purine metabolism; IMP biosynthesis via de novo pathway; 5-amino-1-(5-phospho-D-ribosyl)imidazole from N(2)-formyl-N(1)-(5-phospho-D-ribosyl)glycinamide: step 2/2. The sequence is that of Phosphoribosylformylglycinamidine cyclo-ligase from Gloeobacter violaceus (strain ATCC 29082 / PCC 7421).